Reading from the N-terminus, the 55-residue chain is Rubredoxin-2 (55 aa).

The 54-residue stretch at 1 to 54 folds into the Rubredoxin-like domain; it reads MRKWQCVVCGFIYDEALGLPEEGIPAGTRWEDIPADWVCPDCGVGKIDFEMIEI. Fe cation-binding residues include cysteine 6, cysteine 9, cysteine 39, and cysteine 42.

Belongs to the rubredoxin family. Fe(3+) is required as a cofactor.

The protein resides in the cytoplasm. Its pathway is hydrocarbon metabolism; alkane degradation. Its function is as follows. Involved in the hydrocarbon hydroxylating system, which transfers electrons from NADH to rubredoxin reductase and then through rubredoxin to alkane 1 monooxygenase. This chain is Rubredoxin-2 (rubA2), found in Pseudomonas aeruginosa (strain ATCC 15692 / DSM 22644 / CIP 104116 / JCM 14847 / LMG 12228 / 1C / PRS 101 / PAO1).